The primary structure comprises 375 residues: N-acetyldiaminopimelate deacetylase (375 aa).

Asp69 is an active-site residue. The active-site Proton acceptor is the Glu128.

Belongs to the peptidase M20A family. N-acetyldiaminopimelate deacetylase subfamily.

It catalyses the reaction N-acetyl-(2S,6S)-2,6-diaminopimelate + H2O = (2S,6S)-2,6-diaminopimelate + acetate. It participates in amino-acid biosynthesis; L-lysine biosynthesis via DAP pathway; LL-2,6-diaminopimelate from (S)-tetrahydrodipicolinate (acetylase route): step 3/3. In terms of biological role, catalyzes the conversion of N-acetyl-diaminopimelate to diaminopimelate and acetate. The protein is N-acetyldiaminopimelate deacetylase of Priestia megaterium (strain ATCC 12872 / QMB1551) (Bacillus megaterium).